Consider the following 498-residue polypeptide: Putative BTB/POZ domain-containing protein L788 (498 aa).

One can recognise a BTB domain in the interval 28–99 (TDIILVLEDD…FYGQKIKSGN (72 aa)).

This sequence belongs to the mimivirus BTB/WD family.

The sequence is that of Putative BTB/POZ domain-containing protein L788 from Acanthamoeba polyphaga (Amoeba).